A 293-amino-acid chain; its full sequence is Ribosomal RNA small subunit methyltransferase A (293 aa).

6 residues coordinate S-adenosyl-L-methionine: Asn33, Val35, Gly60, Glu81, Asp111, and Asn130.

This sequence belongs to the class I-like SAM-binding methyltransferase superfamily. rRNA adenine N(6)-methyltransferase family. RsmA subfamily.

It localises to the cytoplasm. The enzyme catalyses adenosine(1518)/adenosine(1519) in 16S rRNA + 4 S-adenosyl-L-methionine = N(6)-dimethyladenosine(1518)/N(6)-dimethyladenosine(1519) in 16S rRNA + 4 S-adenosyl-L-homocysteine + 4 H(+). In terms of biological role, specifically dimethylates two adjacent adenosines (A1518 and A1519) in the loop of a conserved hairpin near the 3'-end of 16S rRNA in the 30S particle. May play a critical role in biogenesis of 30S subunits. The polypeptide is Ribosomal RNA small subunit methyltransferase A (Corynebacterium glutamicum (strain R)).